The sequence spans 213 residues: Probable transaldolase (213 aa).

Residue Lys-83 is the Schiff-base intermediate with substrate of the active site.

It belongs to the transaldolase family. Type 3B subfamily.

The protein localises to the cytoplasm. The enzyme catalyses D-sedoheptulose 7-phosphate + D-glyceraldehyde 3-phosphate = D-erythrose 4-phosphate + beta-D-fructose 6-phosphate. Its pathway is carbohydrate degradation; pentose phosphate pathway; D-glyceraldehyde 3-phosphate and beta-D-fructose 6-phosphate from D-ribose 5-phosphate and D-xylulose 5-phosphate (non-oxidative stage): step 2/3. Transaldolase is important for the balance of metabolites in the pentose-phosphate pathway. The sequence is that of Probable transaldolase from Geobacillus kaustophilus (strain HTA426).